Reading from the N-terminus, the 473-residue chain is GTPase Der (473 aa).

EngA-type G domains lie at 3–167 (FTVA…GKDR) and 203–378 (LRVA…RVWN). GTP-binding positions include 9–16 (GRPNVGKS), 56–60 (DTAGL), 119–122 (NKSE), 209–216 (GRPNAGKS), 256–260 (DTAGM), and 321–324 (NKWD). Positions 379-463 (KRISTAKLNR…PIRIHFRSAE (85 aa)) constitute a KH-like domain.

Belongs to the TRAFAC class TrmE-Era-EngA-EngB-Septin-like GTPase superfamily. EngA (Der) GTPase family. As to quaternary structure, associates with the 50S ribosomal subunit.

In terms of biological role, GTPase that plays an essential role in the late steps of ribosome biogenesis. In Rhizobium leguminosarum bv. trifolii (strain WSM2304), this protein is GTPase Der.